Consider the following 143-residue polypeptide: Small ribosomal subunit protein uS9 (143 aa).

S2 is modified (N-acetylserine). A disordered region spans residues 123-143; it reads MPEPKKFGGKGARSRYQKSYR. The span at 134–143 shows a compositional bias: basic residues; that stretch reads ARSRYQKSYR.

The protein belongs to the universal ribosomal protein uS9 family.

The protein is Small ribosomal subunit protein uS9 (RPS16) of Maudiozyma exigua (Yeast).